Reading from the N-terminus, the 239-residue chain is tRNA (guanine-N(7)-)-methyltransferase (239 aa).

The S-adenosyl-L-methionine site is built by glutamate 69, glutamate 94, aspartate 121, and aspartate 144. Residue aspartate 144 is part of the active site. Residues lysine 148, aspartate 180, and 217-220 (TKFE) contribute to the substrate site.

This sequence belongs to the class I-like SAM-binding methyltransferase superfamily. TrmB family.

The enzyme catalyses guanosine(46) in tRNA + S-adenosyl-L-methionine = N(7)-methylguanosine(46) in tRNA + S-adenosyl-L-homocysteine. Its pathway is tRNA modification; N(7)-methylguanine-tRNA biosynthesis. Its function is as follows. Catalyzes the formation of N(7)-methylguanine at position 46 (m7G46) in tRNA. The chain is tRNA (guanine-N(7)-)-methyltransferase from Pseudoalteromonas atlantica (strain T6c / ATCC BAA-1087).